We begin with the raw amino-acid sequence, 181 residues long: MEEVKKDVYSVWALPDEESEPRFKKLMEALRSEFTGPRFVPHVTVAVSAYLTADEAKKMFESACDGLKAYTATVDRVSTGTFFFQCVFLLLQTTPEVMEAGEHCKNHFNCSTTTPYMPHLSLLYAELTEEEKKNAQEKAYTLDSSLDGLSFRLNRLALCKTDTEDKTLETWETVAVCNLNP.

The active-site Proton donor/acceptor is the His42. Thr44 is a substrate binding site. Intrachain disulfides connect Cys64–Cys177 and Cys104–Cys110. His119 (proton donor/acceptor) is an active-site residue. Substrate contacts are provided by Ser121 and Tyr124.

Belongs to the 2H phosphoesterase superfamily. CPD1 family. Expressed in leaves, stems, roots, floral buds and germinating seeds.

The protein resides in the cytoplasm. It carries out the reaction ADP-alpha-D-ribose 1'',2''-cyclic phosphate + H2O = ADP-alpha-D-ribose 1''-phosphate + H(+). It catalyses the reaction 2',3'-cyclophospho-AMP + H2O = adenosine 2'-phosphate + H(+). The catalysed reaction is 2',3'-cyclophospho-GMP + H2O = guanosine 2'-phosphate + H(+). The enzyme catalyses 2',3'-cyclophospho-UMP + H2O = uridine 2'-phosphate + H(+). It carries out the reaction 2',3'-cyclophospho-CMP + H2O = cytidine 2'-phosphate + H(+). With respect to regulation, inhibited by Cu(2+) and Zn(2+) at 0.5 mM by 93 and 87% respectively. Not inhibited by Ca(2+), Mg(2+), Co(2+), Ni(2+), and EDTA at 0.5 mM. Hydrolyzes ADP-ribose 1'',2''-cyclic phosphate (Appr&gt;1) that is produced during tRNA splicing into ADP-ribose 1''-phosphate (Appr-1''p). Also acts on nucleoside 2',3'-cyclic phosphates. This is Cyclic phosphodiesterase from Arabidopsis thaliana (Mouse-ear cress).